Reading from the N-terminus, the 314-residue chain is Ribosomal RNA small subunit methyltransferase H (314 aa).

Residues 40 to 42 (GGH), Asp-60, Phe-85, Asp-107, and Gln-114 each bind S-adenosyl-L-methionine.

This sequence belongs to the methyltransferase superfamily. RsmH family.

It is found in the cytoplasm. The enzyme catalyses cytidine(1402) in 16S rRNA + S-adenosyl-L-methionine = N(4)-methylcytidine(1402) in 16S rRNA + S-adenosyl-L-homocysteine + H(+). Specifically methylates the N4 position of cytidine in position 1402 (C1402) of 16S rRNA. This Hydrogenovibrio crunogenus (strain DSM 25203 / XCL-2) (Thiomicrospira crunogena) protein is Ribosomal RNA small subunit methyltransferase H.